The sequence spans 197 residues: 7-methyl-GTP pyrophosphatase (197 aa).

Asp-72 (proton acceptor) is an active-site residue.

Belongs to the Maf family. YceF subfamily. The cofactor is a divalent metal cation.

It localises to the cytoplasm. It carries out the reaction N(7)-methyl-GTP + H2O = N(7)-methyl-GMP + diphosphate + H(+). Functionally, nucleoside triphosphate pyrophosphatase that hydrolyzes 7-methyl-GTP (m(7)GTP). May have a dual role in cell division arrest and in preventing the incorporation of modified nucleotides into cellular nucleic acids. The polypeptide is 7-methyl-GTP pyrophosphatase (Bordetella avium (strain 197N)).